Reading from the N-terminus, the 121-residue chain is Small ribosomal subunit protein uS13 (121 aa).

The segment at 92 to 121 is disordered; the sequence is HRMGLPCRGQKTKTNARTRKGPRRGAARRK. Basic residues predominate over residues 101 to 121; sequence QKTKTNARTRKGPRRGAARRK.

The protein belongs to the universal ribosomal protein uS13 family. In terms of assembly, part of the 30S ribosomal subunit. Forms a loose heterodimer with protein S19. Forms two bridges to the 50S subunit in the 70S ribosome.

In terms of biological role, located at the top of the head of the 30S subunit, it contacts several helices of the 16S rRNA. In the 70S ribosome it contacts the 23S rRNA (bridge B1a) and protein L5 of the 50S subunit (bridge B1b), connecting the 2 subunits; these bridges are implicated in subunit movement. Contacts the tRNAs in the A and P-sites. In Desulfotalea psychrophila (strain LSv54 / DSM 12343), this protein is Small ribosomal subunit protein uS13.